Reading from the N-terminus, the 872-residue chain is Leucine--tRNA ligase (872 aa).

A 'HIGH' region motif is present at residues 42 to 52 (PYPSGNLHMGH). The 'KMSKS' region motif lies at 631–635 (KMSKS). Lysine 634 lines the ATP pocket.

Belongs to the class-I aminoacyl-tRNA synthetase family.

It localises to the cytoplasm. The catalysed reaction is tRNA(Leu) + L-leucine + ATP = L-leucyl-tRNA(Leu) + AMP + diphosphate. In Blochmanniella pennsylvanica (strain BPEN), this protein is Leucine--tRNA ligase.